The chain runs to 79 residues: Cell division protein ZapB (79 aa).

Residues Leu3–Val79 adopt a coiled-coil conformation. Over residues Ser36–Gln45 the composition is skewed to polar residues. The disordered stretch occupies residues Ser36–Ser63. A compositionally biased stretch (basic and acidic residues) spans His46–Ser57.

It belongs to the ZapB family. In terms of assembly, homodimer. The ends of the coiled-coil dimer bind to each other, forming polymers. Interacts with FtsZ.

The protein localises to the cytoplasm. In terms of biological role, non-essential, abundant cell division factor that is required for proper Z-ring formation. It is recruited early to the divisome by direct interaction with FtsZ, stimulating Z-ring assembly and thereby promoting cell division earlier in the cell cycle. Its recruitment to the Z-ring requires functional FtsA or ZipA. The sequence is that of Cell division protein ZapB from Salmonella agona (strain SL483).